The chain runs to 1191 residues: DNA topoisomerase 2 (1191 aa).

ATP-binding positions include Asn-64, Asn-95, and 142-149 (GTNGVGLK). Positions 437, 538, and 540 each coordinate Mg(2+). Residues 706–1173 (IPNFLDGMTR…PGASVWLEEI (468 aa)) enclose the Topo IIA-type catalytic domain. Catalysis depends on Tyr-799, which acts as the O-(5'-phospho-DNA)-tyrosine intermediate.

It belongs to the type II topoisomerase family. Mg(2+) serves as cofactor. The cofactor is Mn(2+). It depends on Ca(2+) as a cofactor.

The protein resides in the host cytoplasm. The enzyme catalyses ATP-dependent breakage, passage and rejoining of double-stranded DNA.. Functionally, type II topoisomerase. Processively relaxes supercoiled DNA. Displays DNA-supercoiling activity only when associated with the viral histone-like protein. The chain is DNA topoisomerase 2 from Ornithodoros (relapsing fever ticks).